Here is a 373-residue protein sequence, read N- to C-terminus: StAR-related lipid transfer protein 7, mitochondrial (373 aa).

The N-terminal 61 residues, 1-61 (MFPRRPPATL…YSESSRCALL (61 aa)), are a transit peptide targeting the mitochondrion. The stretch at 89–114 (DEERIQEEELQRSINEMKRLEEMSNI) forms a coiled coil. The START domain occupies 115–330 (FQSSGVENYP…LHMATLKAKN (216 aa)). Disordered regions lie at residues 118-141 (SGVE…KDKE) and 347-373 (SSEA…IEYA).

In terms of processing, proteolytically cleaved by PARL. Expressed in epithelial cells of airways, peripheral bronchioles and alveoli, as well as in the basal cell layer of the epidermis (at protein level).

Its subcellular location is the mitochondrion. Functionally, may play a protective role in mucosal tissues by preventing exaggerated allergic responses. This Mus musculus (Mouse) protein is StAR-related lipid transfer protein 7, mitochondrial (Stard7).